The following is a 511-amino-acid chain: Keratin, type II cytoskeletal 72 (511 aa).

The head stretch occupies residues 1–124; it reads MSRQLTHFPR…DPEIQRVRAQ (124 aa). Residues 125-160 form a coil 1A region; that stretch reads EREQIKALNNKFASFIDKVRFLEQQNQVLETKWNLL. Positions 125 to 438 constitute an IF rod domain; it reads EREQIKALNN…KLLESEECRM (314 aa). Positions 161–179 are linker 1; the sequence is QQLDLNNCRKNLEPIYEGY. Residues 180 to 271 are coil 1B; that stretch reads ISNLQKQLEM…CLYEGEITQI (92 aa). The linker 12 stretch occupies residues 272 to 295; it reads QSHISDTSIVLSMDNNRDLDLDSI. Residues 296–434 are coil 2; that stretch reads IAEVRAQYEE…ATYRKLLESE (139 aa). Residues 435-511 form a tail region; that stretch reads ECRMSGEYPN…SSCATKKASR (77 aa). The segment at 486–511 is disordered; the sequence is GSCGSELKDPLAKTSGSSCATKKASR.

Belongs to the intermediate filament family. As to quaternary structure, heterotetramer of two type I and two type II keratins. As to expression, highly expressed in hair follicles from scalp and eyebrow. Also expressed in palmoplantar epidermis. Not expressed in face skin despite the presence of fine hairs histologically. In hair, it is specifically present in the inner root sheath (IRS) of the hair follicle. Present in the IRS cuticle, but not in Henle or Huxley layers of the IRS. In the IRS cuticle, its presence is delayed up to the height of the apex of the dermal papilla (at protein level).

Its function is as follows. Has a role in hair formation. Specific component of keratin intermediate filaments in the inner root sheath (IRS) of the hair follicle. The sequence is that of Keratin, type II cytoskeletal 72 (KRT72) from Homo sapiens (Human).